Consider the following 1052-residue polypeptide: MNHVINFVLKNKFAVWLMTIIVTAAGLYAGMNMKQESIPDVNMPYLTISTTYPGATPSQVADEVTKPVEQAVQNLDGVSVVTSTSYENASSVMIEYDYEKDMDKAKTEAAEALENVNLPDDAKDPEISRYSLNSFPILTLSVSSDKDNLQELTKQVEDSLVSKLEGIEGVASVQVSGQQVEEVEFSFKEDKLKEYGLDEDTVKQVIQGSDVTTPLGLYTFGNEEKSVVVSGDIETIKDLKNMRIPTASASSAGSSAASQAGAQSAQAAQSAQAAAQVQQSASTAVPTVKLSDIATIKDVKKAESVSRTNGKDSIGINIVKANDANTVEVADDVKAELKKFKEDHKGFNYSATLDMAEPITQSVDTMLSKAIFGAIFAIVIILLFLRDIKSTLISVVSIPLSLLIALLVLQQLDITLNIMTLGAMTVAIGRVVDDSIVVIENIYRRMRLKDEPLRGKALVREATKEMFKPIMSSTIVTIAVFLPLALVGGQIGELFIPFALTIVFALAASLVISITLVPMLAHSLFKKSLTGAPIKAKEHKPGRLANIYKKVLNWALSHKWITSIIAVLMLLGSLFLVPLIGASYLPSEEEKTMQLTYSPEPGETKKEAENEAEKAEKILLDRKHVDTVQYSLGSGSPLAGGDSNGALFYIKYESDTPDFDKEKDNVLKEIQKQSDRGEWKSQDFSSSGNNNELTYYVYGDSENDIKDTVKDIEKIMKDEKDLKNVNSGLSSTYDEYTFVADQEKLSKLGLTASQISQALMSQTSQEPLTTVKKDGKELDVNIKTEKDEYKSVKDLENKKITSATGQEVKIGDVAKVKEGSTSDTVSKRDGKVYADVTGEVTSDNVTAVSAAIQKKIDKLDHPDNVSIDTGGVSADIADSFTKLGLAMLAAIAIVYLVLVITFGGALAPFAILFSLPFTVIGALVGLYVSGETISLNAMIGMLMLIGIVVTNAIVLIDRVIHKEAEGLSTREALLEAGSTRLRPILMTAIATIGALIPLALGFEGGSQVISKGLGVTVIGGLISSTLLTLLIVPIVYEVLAKFRKKKPGTEEE.

Belongs to the resistance-nodulation-cell division (RND) (TC 2.A.6) family.

Functionally, required for self-resistance to surfactin, an antimicrobial lipopeptide surfactant produced by B.subtilis. Also required for swarming motility. The sequence is that of Swarming motility protein SwrC (swrC) from Bacillus subtilis (strain 168).